The primary structure comprises 179 residues: Adaptation to cold protein A (179 aa).

Residues 133-179 are disordered; sequence KATPAPKRSADDDFEDEDSDYADYSDDDDDEGEEEDGYYDHYDDEDR. The span at 144–179 shows a compositional bias: acidic residues; the sequence is DDFEDEDSDYADYSDDDDDEGEEEDGYYDHYDDEDR.

Part of an operon involved in cold adaptation. The chain is Adaptation to cold protein A from Shewanella oneidensis (strain ATCC 700550 / JCM 31522 / CIP 106686 / LMG 19005 / NCIMB 14063 / MR-1).